The sequence spans 282 residues: 4-diphosphocytidyl-2-C-methyl-D-erythritol kinase (282 aa).

Residue K12 is part of the active site. Residue 95–105 participates in ATP binding; that stretch reads PMGGGIGGGSS. D137 is an active-site residue.

It belongs to the GHMP kinase family. IspE subfamily.

It carries out the reaction 4-CDP-2-C-methyl-D-erythritol + ATP = 4-CDP-2-C-methyl-D-erythritol 2-phosphate + ADP + H(+). It participates in isoprenoid biosynthesis; isopentenyl diphosphate biosynthesis via DXP pathway; isopentenyl diphosphate from 1-deoxy-D-xylulose 5-phosphate: step 3/6. In terms of biological role, catalyzes the phosphorylation of the position 2 hydroxy group of 4-diphosphocytidyl-2C-methyl-D-erythritol. The protein is 4-diphosphocytidyl-2-C-methyl-D-erythritol kinase of Pseudomonas aeruginosa (strain ATCC 15692 / DSM 22644 / CIP 104116 / JCM 14847 / LMG 12228 / 1C / PRS 101 / PAO1).